A 201-amino-acid polypeptide reads, in one-letter code: Probable quinol oxidase subunit 3 (201 aa).

The next 5 membrane-spanning stretches (helical) occupy residues 20 to 40 (LGFWIFITAEFALFGTLFATL), 62 to 82 (LVLIMTFALLFSSYTCGIAIY), 91 to 111 (LMMFWMIITLLLGLVFVGFEI), 133 to 153 (FFILLGTHGCHVSLGIVWAIC), and 172 to 192 (FIVSLYWHFLDVVWVFIFTAV).

This sequence belongs to the cytochrome c oxidase subunit 3 family.

The protein resides in the cell membrane. The catalysed reaction is 2 a quinol + O2 = 2 a quinone + 2 H2O. Catalyzes quinol oxidation with the concomitant reduction of oxygen to water. The protein is Probable quinol oxidase subunit 3 (qoxC) of Staphylococcus aureus (strain MSSA476).